Reading from the N-terminus, the 353-residue chain is Quinolinate synthase (353 aa).

Iminosuccinate contacts are provided by histidine 47 and serine 68. Cysteine 113 is a binding site for [4Fe-4S] cluster. Iminosuccinate contacts are provided by residues 139 to 141 (YAN) and serine 156. Cysteine 200 lines the [4Fe-4S] cluster pocket. Residues 226 to 228 (HPE) and threonine 243 contribute to the iminosuccinate site. Cysteine 297 contacts [4Fe-4S] cluster.

This sequence belongs to the quinolinate synthase family. Type 1 subfamily. [4Fe-4S] cluster is required as a cofactor.

The protein localises to the cytoplasm. It catalyses the reaction iminosuccinate + dihydroxyacetone phosphate = quinolinate + phosphate + 2 H2O + H(+). It participates in cofactor biosynthesis; NAD(+) biosynthesis; quinolinate from iminoaspartate: step 1/1. Its function is as follows. Catalyzes the condensation of iminoaspartate with dihydroxyacetone phosphate to form quinolinate. The chain is Quinolinate synthase from Yersinia pseudotuberculosis serotype O:3 (strain YPIII).